We begin with the raw amino-acid sequence, 317 residues long: Taste receptor type 2 member 14 (317 aa).

The Extracellular segment spans residues 1–7 (MGGVIKS). A helical transmembrane segment spans residues 8-28 (IFTFVLIVEFIIGNLGNSFIA). Over 29–55 (LVNCIDWVKGRKISSVDRILTALAISK) the chain is Cytoplasmic. The helical transmembrane segment at 56 to 76 (ISLVWLIFGSWCVSVFFPALF) threads the bilayer. The Extracellular portion of the chain corresponds to 77–87 (ATEKMFRMLTN). The cholesterol site is built by Thr-86 and Trp-89. A helical transmembrane segment spans residues 88 to 108 (IWTVINHFSVWLATGLGTFYF). Residues 109–129 (LKIANFSNSIFLYLKWRVKKV) lie on the Cytoplasmic side of the membrane. The helical transmembrane segment at 130 to 150 (VLVLLLVTSVFLFLNIALINI) threads the bilayer. Topologically, residues 151-184 (HINASINGYRRNKTCSSDSSNFTRFSSLIVLTST) are extracellular. N-linked (GlcNAc...) asparagine glycosylation is found at Asn-153, Asn-162, and Asn-171. Residue Val-180 coordinates cholesterol. Residues 185 to 205 (VFIFIPFTLSLAMFLLLIFSX) form a helical membrane-spanning segment. Residues 206–232 (WKHRKKMQHTVKRSGDASTKAHRGVKS) lie on the Cytoplasmic side of the membrane. The helical transmembrane segment at 233-253 (VXTFFLLYAIFCLSFFISVWT) threads the bilayer. The Extracellular portion of the chain corresponds to 254-261 (SERLEENL). The helical transmembrane segment at 262–282 (IILSQVMGMAYPSCHSCVLIL) threads the bilayer. The cholesterol site is built by Ser-265 and Met-268. Over 283 to 317 (GNKKLRQASLSVLLWLRYMFKDGEPSGHKEFRESS) the chain is Cytoplasmic.

The protein belongs to the G-protein coupled receptor T2R family. As to quaternary structure, core component of the TAS2R14-GNAI1 complex, consisting of TAS2R14, GNAI1, GNB1 and GNG2; within the complex interacts with GNAI1. Core component of the TAS2R14-GNAT3 complex, consisting of TAS2R14, GNAT3, GNB1 and GNG2; within the complex interacts with GNAT3. Core component of the TAS2R14-GNAS2 complex, consisting of TAS2R14, GNAS2, GNB1 and GNG2; within the complex interacts with GNAS2.

The protein resides in the membrane. It carries out the reaction Ca(2+)(in) = Ca(2+)(out). It catalyses the reaction 3',5'-cyclic AMP(in) = 3',5'-cyclic AMP(out). With respect to regulation, basal activity is enhanced by binding to bitter tastants, such as flufenamic acid and aristolochic acid. Regulated by cholesterol in a concentration-dependent manner. Its function is as follows. Gustducin-linked G-protein coupled receptor that plays a role in the perception of bitterness. The activity of this receptor stimulates GNAT3, activating the gustducin G-protein pathway. Likely plays a role in sensing the chemical composition of the gastrointestinal content and other extra-oral tissues via the inhibitory G-protein pathways. The sequence is that of Taste receptor type 2 member 14 (TAS2R14) from Pan troglodytes (Chimpanzee).